Consider the following 329-residue polypeptide: Phenylalanine--tRNA ligase alpha subunit (329 aa).

Glutamate 254 provides a ligand contact to Mg(2+).

This sequence belongs to the class-II aminoacyl-tRNA synthetase family. Phe-tRNA synthetase alpha subunit type 1 subfamily. Tetramer of two alpha and two beta subunits. Requires Mg(2+) as cofactor.

Its subcellular location is the cytoplasm. The catalysed reaction is tRNA(Phe) + L-phenylalanine + ATP = L-phenylalanyl-tRNA(Phe) + AMP + diphosphate + H(+). The chain is Phenylalanine--tRNA ligase alpha subunit from Actinobacillus succinogenes (strain ATCC 55618 / DSM 22257 / CCUG 43843 / 130Z).